Here is a 367-residue protein sequence, read N- to C-terminus: MEKSSIYGLTWTNLTEWLEAHGQKKFRATQVWDWLYRKRVKTFEEMSNVPKETIELLTANFVMNTLEEQVVQESTDGTTKYLFKLSDGNLIETVMMKQEYGLSVCVTTQVGCNIGCTFCASGLLKKSRDLTAGEIVEQIMNVQHYLDGRNLEERVSHVVVMGIGEPFDNYDNVMDFLRVINHDKGLAIGARHITVSTSGLAPRIIDFANEDFQVNLAISLHAPNNELRTSIMRINKTYSIEKLMEAIHYYVNKTNRRITFEYIMLKGVNDHKKEALELAALLGEHRHLAYVNLIPYNPVDEHIDYERSTKEDVLAFYDTLKKNGINCVIRREHGTDIDAACGQLRSKQIKRVGVRERMKQKQAAAEE.

Residue E92 is the Proton acceptor of the active site. The Radical SAM core domain occupies 98–326 (QEYGLSVCVT…YDTLKKNGIN (229 aa)). The cysteines at positions 105 and 341 are disulfide-linked. [4Fe-4S] cluster is bound by residues C112, C116, and C119. Residues 164–165 (GE), S196, 219–221 (SLH), and N297 contribute to the S-adenosyl-L-methionine site. The active-site S-methylcysteine intermediate is the C341.

The protein belongs to the radical SAM superfamily. RlmN family. It depends on [4Fe-4S] cluster as a cofactor.

The protein resides in the cytoplasm. It carries out the reaction adenosine(2503) in 23S rRNA + 2 reduced [2Fe-2S]-[ferredoxin] + 2 S-adenosyl-L-methionine = 2-methyladenosine(2503) in 23S rRNA + 5'-deoxyadenosine + L-methionine + 2 oxidized [2Fe-2S]-[ferredoxin] + S-adenosyl-L-homocysteine. It catalyses the reaction adenosine(37) in tRNA + 2 reduced [2Fe-2S]-[ferredoxin] + 2 S-adenosyl-L-methionine = 2-methyladenosine(37) in tRNA + 5'-deoxyadenosine + L-methionine + 2 oxidized [2Fe-2S]-[ferredoxin] + S-adenosyl-L-homocysteine. In terms of biological role, specifically methylates position 2 of adenine 2503 in 23S rRNA and position 2 of adenine 37 in tRNAs. The protein is Probable dual-specificity RNA methyltransferase RlmN of Listeria monocytogenes serovar 1/2a (strain ATCC BAA-679 / EGD-e).